Consider the following 612-residue polypeptide: Protein lin-61 (612 aa).

MBT repeat units follow at residues 143-249 (YLWE…MDKI), 263-380 (NDMV…GYQL), 381-501 (NAKK…LVPP), and 508-607 (FRWD…LQPP).

In terms of assembly, interacts preferentially with histone H3 that is dimethylated or trimethylated at 'Lys-9'.

The protein resides in the nucleus. The protein localises to the chromosome. Synthetic multivulva class B (synMuvB) protein required to repress the induction of vulval development by Ras signaling. Unlike other synMuv proteins it does not associate with the multiprotein DRM complex and the NuRD-like complex. Interaction with methylated histone H3 is essential for vulva development. It has a role in maintaining genome stability. This chain is Protein lin-61 (lin-61), found in Caenorhabditis elegans.